The chain runs to 75 residues: Small ribosomal subunit protein bS18 (75 aa).

The protein belongs to the bacterial ribosomal protein bS18 family. In terms of assembly, part of the 30S ribosomal subunit. Forms a tight heterodimer with protein bS6.

Functionally, binds as a heterodimer with protein bS6 to the central domain of the 16S rRNA, where it helps stabilize the platform of the 30S subunit. In Pseudoalteromonas translucida (strain TAC 125), this protein is Small ribosomal subunit protein bS18.